A 1079-amino-acid polypeptide reads, in one-letter code: MSDVELVKKMLRAVLQSSKHGVAMARLQGDYRALTGEMIPFRKFGHDTLESFLRSIPGVVRLERSITGEVMCFAGVCEETAHIAQLVARQKNVKKTGCSKLLNFQMRARTSHLFSHNVKPRLSLRQPSNMTHPGRGSVTSFYSTQRKLYSNDLPSSRAPAWQMNRKSPVPEKTSVVPSKINTNIKTPLKKTSGTAAQQKPVNRADVELVQGRIKQLLQKYSSGVWLSKIPQLYKSMFQEELHIIQEVEKWTHICTVEKPGSNNIVDRLVYPVLEPVPKASPVPVKSPCKQSPNTALLKQPTLTQKTTRTFRTLAINIPQSTPKPQTPLSPTSPNSTMIDFTLSETPKTQSLSPITPPSTPPAHQPLTTELKQKLRQLLNKYSQGLWAHGLPQLFQEAFGCAFPQYVLEDLSLLADTCMVEYPMPDNRKRAILYTLPCQVQTQPRSRPPPLVLPCTSNPHVPPLIIPTADFHSVFVIEINSTNNVVVRFAGGGYSKSLEVMEEEMQNFYNNIGAGLCLLSPKIGQLVAVASSDGAMLRAQVHQLSEDKVKVYFLDHGFFDLVSRKTLFQLRDQFMTLPFQATTCQLAGLEPFSTDPVVLKTLQSLAVGRSLLAEIVEREDTPLVVLYDTSENDDVNVTAMCLKALQDKSMENPLQVNSVYTNVCVTNVCSDGSVYCQLPSRGQAKLKDIMDKIEAHFISQLTWELLVSRPFCGKVCLAKYKGKWARAEIINLHGSHVLDILFLDLGLPASLEVSELREIPPIFLKELITIPPQAIKCLLEDLNVDRAVWPPEAVLWLRETVHNKAPSCMKIVKLDETRTVHIYLFCGNEAQDIHDSVNRQLASCPFWKQDVYANKINKASELFLPDAGEPSGSSPAPSNALTLPPQLNLPLVGQNMDVFVSVACHPGHFVLQPWQDLYKLVVLMGEMVLFYNKQEVTTVDIQKNNVYAAKIDNNWHRVLVKGLLTNGLVSVYELDYGKYELINYTQLQPLIEEFRQLPFQGISAQLADVKKEVWCEEASMVFRNHVEKKPLVAQIESVEEGEWPWERKISVYLVDTTQENKDIWIHNIMKEFLDEISRDA.

The HTH OST-type 1 domain occupies 3–76 (DVELVKKMLR…TGEVMCFAGV (74 aa)). The segment at 153–175 (LPSSRAPAWQMNRKSPVPEKTSV) is disordered. HTH OST-type domains lie at 205-270 (DVEL…RLVY) and 366-434 (LTTE…ILYT). Tudor domains lie at 519-576 (SPKI…FMTL) and 708-765 (RPFC…FLKE).

The protein belongs to the TDRD7 family.

The protein resides in the cytoplasm. Its function is as follows. Component of specific cytoplasmic RNA granules involved in post-transcriptional regulation of specific genes: probably acts by binding to specific mRNAs and regulating their translation. Probably required during spermatogenesis. Required for structural integrity of granules in primordial germ cells (PGCs). The protein is Tudor domain-containing protein 7A (tdrd7a) of Danio rerio (Zebrafish).